Consider the following 546-residue polypeptide: CTP synthase (546 aa).

Positions 1-266 (MTTNYIFVTG…DDLVCTRFGI (266 aa)) are amidoligase domain. Residue Ser14 participates in CTP binding. Ser14 lines the UTP pocket. Residues 15–20 (SLGKGI) and Asp72 each bind ATP. Residues Asp72 and Glu140 each contribute to the Mg(2+) site. CTP-binding positions include 147–149 (DIE), 187–192 (KTKPTQ), and Lys223. UTP is bound by residues 187–192 (KTKPTQ) and Lys223. 239–241 (KDV) is an ATP binding site. The Glutamine amidotransferase type-1 domain occupies 291–542 (TIGMVGKYIE…VKAAGQYSRG (252 aa)). Gly352 contacts L-glutamine. Cys379 serves as the catalytic Nucleophile; for glutamine hydrolysis. Residues 380 to 383 (LGMQ), Glu403, and Arg470 contribute to the L-glutamine site. Catalysis depends on residues His515 and Glu517.

The protein belongs to the CTP synthase family. As to quaternary structure, homotetramer.

The enzyme catalyses UTP + L-glutamine + ATP + H2O = CTP + L-glutamate + ADP + phosphate + 2 H(+). It catalyses the reaction L-glutamine + H2O = L-glutamate + NH4(+). It carries out the reaction UTP + NH4(+) + ATP = CTP + ADP + phosphate + 2 H(+). Its pathway is pyrimidine metabolism; CTP biosynthesis via de novo pathway; CTP from UDP: step 2/2. Allosterically activated by GTP, when glutamine is the substrate; GTP has no effect on the reaction when ammonia is the substrate. The allosteric effector GTP functions by stabilizing the protein conformation that binds the tetrahedral intermediate(s) formed during glutamine hydrolysis. Inhibited by the product CTP, via allosteric rather than competitive inhibition. In terms of biological role, catalyzes the ATP-dependent amination of UTP to CTP with either L-glutamine or ammonia as the source of nitrogen. Regulates intracellular CTP levels through interactions with the four ribonucleotide triphosphates. This Vibrio parahaemolyticus serotype O3:K6 (strain RIMD 2210633) protein is CTP synthase.